A 640-amino-acid polypeptide reads, in one-letter code: Threonine--tRNA ligase (640 aa).

Positions 1–60 constitute a TGS domain; it reads MKITFPDGAVKEFEPGVSTADIAASISPGLKKKALAGKLNGELLDLVTPIHEDGAIEIVT. The interval 241 to 538 is catalytic; the sequence is DHRKLGKELE…LIEEYKGAFP (298 aa). Residues cysteine 334, histidine 385, and histidine 515 each coordinate Zn(2+).

It belongs to the class-II aminoacyl-tRNA synthetase family. In terms of assembly, homodimer. It depends on Zn(2+) as a cofactor.

The protein localises to the cytoplasm. It carries out the reaction tRNA(Thr) + L-threonine + ATP = L-threonyl-tRNA(Thr) + AMP + diphosphate + H(+). Its function is as follows. Catalyzes the attachment of threonine to tRNA(Thr) in a two-step reaction: L-threonine is first activated by ATP to form Thr-AMP and then transferred to the acceptor end of tRNA(Thr). Also edits incorrectly charged L-seryl-tRNA(Thr). This Listeria monocytogenes serovar 1/2a (strain ATCC BAA-679 / EGD-e) protein is Threonine--tRNA ligase.